Reading from the N-terminus, the 511-residue chain is MSRQLTHFPRGERLGFSGCSAVLSGGIGSSSASFRARVKGSASFGSKSLSCLGGSRSLALSAAARRGGGRLGGFVGTAFGSAGLGPKCPSVCPPGGIPQVTVNKSLLAPLNVEMDPEIQRVRAQEREQIKALNNKFASFIDKVRFLEQQNQVLETKWNLLQQLDLNNCRKNLEPIYEGYISNLQKQLEMLSGDGVRLDSELRNMQDLVEDYKKRYEVEINRRTAAENEFVVLKKDVDAAYMNKVELQAKVDSLTDEIKFFKCLYEGEITQIQSHISDTSIVLSMDNNRDLDLDSIIAEVRAQYEEIALKSKAEAETLYQTKIQELQVTAGQHGDDLKLTKAEISELNRLIQRIRSEIGNVKKQCADLETAIADAEQRGDCALKDARAKLDELEGALHQAKEELARMLREYQELVSLKLALDMEIATYRKLLESEECRMSGEYPNSVSISVISSTNAGAGGAGFSMGFGASSSYSYKTAAADVKTKGSCGSELKDPLAKTSGSSCATKKASR.

The tract at residues 1 to 124 is head; the sequence is MSRQLTHFPR…DPEIQRVRAQ (124 aa). The coil 1A stretch occupies residues 125–160; the sequence is EREQIKALNNKFASFIDKVRFLEQQNQVLETKWNLL. The IF rod domain maps to 125-438; sequence EREQIKALNN…KLLESEECRM (314 aa). Positions 161 to 179 are linker 1; it reads QQLDLNNCRKNLEPIYEGY. Residues 180–271 form a coil 1B region; that stretch reads ISNLQKQLEM…CLYEGEITQI (92 aa). Positions 272 to 295 are linker 12; the sequence is QSHISDTSIVLSMDNNRDLDLDSI. Positions 296 to 434 are coil 2; sequence IAEVRAQYEE…ATYRKLLESE (139 aa). The interval 435 to 511 is tail; sequence ECRMSGEYPN…SSCATKKASR (77 aa). Residues 486 to 511 are disordered; that stretch reads GSCGSELKDPLAKTSGSSCATKKASR.

This sequence belongs to the intermediate filament family. As to quaternary structure, heterotetramer of two type I and two type II keratins. In terms of tissue distribution, highly expressed in hair follicles from scalp and eyebrow. Also expressed in palmoplantar epidermis. Not expressed in face skin despite the presence of fine hairs histologically. In hair, it is specifically present in the inner root sheath (IRS) of the hair follicle. Present in the IRS cuticle, but not in Henle or Huxley layers of the IRS. In the IRS cuticle, its presence is delayed up to the height of the apex of the dermal papilla (at protein level).

In terms of biological role, has a role in hair formation. Specific component of keratin intermediate filaments in the inner root sheath (IRS) of the hair follicle. The polypeptide is Keratin, type II cytoskeletal 72 (KRT72) (Homo sapiens (Human)).